A 153-amino-acid chain; its full sequence is Small ribosomal subunit protein bS6 (153 aa).

The tract at residues 97-153 is disordered; that stretch reads EEGPSAMMRKADRDRERDDRGGGFRGERDGGGFRGDRGDRGDRGPRRPRDEETADEE. Residues 105–147 are compositionally biased toward basic and acidic residues; it reads RKADRDRERDDRGGGFRGERDGGGFRGDRGDRGDRGPRRPRDE.

The protein belongs to the bacterial ribosomal protein bS6 family.

Its function is as follows. Binds together with bS18 to 16S ribosomal RNA. The protein is Small ribosomal subunit protein bS6 of Bradyrhizobium sp. (strain BTAi1 / ATCC BAA-1182).